We begin with the raw amino-acid sequence, 160 residues long: Cytochrome b6-f complex subunit 4 (160 aa).

A run of 3 helical transmembrane segments spans residues 36–56 (LLYIFPVVILGTIACTIGLAV), 95–115 (LLGVLLMASVPVGLLTVPFLE), and 131–151 (TVFLIGTAVAIWLGIGAALPI).

It belongs to the cytochrome b family. PetD subfamily. In terms of assembly, the 4 large subunits of the cytochrome b6-f complex are cytochrome b6, subunit IV (17 kDa polypeptide, petD), cytochrome f and the Rieske protein, while the 4 small subunits are petG, petL, petM and petN. The complex functions as a dimer.

Its subcellular location is the plastid. The protein localises to the chloroplast thylakoid membrane. In terms of biological role, component of the cytochrome b6-f complex, which mediates electron transfer between photosystem II (PSII) and photosystem I (PSI), cyclic electron flow around PSI, and state transitions. The polypeptide is Cytochrome b6-f complex subunit 4 (Chara vulgaris (Common stonewort)).